The following is a 205-amino-acid chain: uncharacterized protein (205 aa).

The next 4 helical transmembrane spans lie at 18–38, 69–89, 106–126, and 127–147; these read ATVN…GTIG, LGIF…CFYA, VVWI…YYIM, and LLHP…LFLI.

It localises to the mitochondrion membrane. This is an uncharacterized protein from Arabidopsis thaliana (Mouse-ear cress).